Consider the following 348-residue polypeptide: Anthranilate phosphoribosyltransferase (348 aa).

5-phospho-alpha-D-ribose 1-diphosphate-binding positions include glycine 83, 86–87 (GD), threonine 91, 93–96 (NVST), 111–119 (KHGNRAASS), and threonine 123. Residue glycine 83 participates in anthranilate binding. Serine 95 contacts Mg(2+). Anthranilate is bound at residue asparagine 114. Residue arginine 169 coordinates anthranilate. The Mg(2+) site is built by aspartate 227 and glutamate 228.

This sequence belongs to the anthranilate phosphoribosyltransferase family. Homodimer. Requires Mg(2+) as cofactor.

The enzyme catalyses N-(5-phospho-beta-D-ribosyl)anthranilate + diphosphate = 5-phospho-alpha-D-ribose 1-diphosphate + anthranilate. Its pathway is amino-acid biosynthesis; L-tryptophan biosynthesis; L-tryptophan from chorismate: step 2/5. Catalyzes the transfer of the phosphoribosyl group of 5-phosphorylribose-1-pyrophosphate (PRPP) to anthranilate to yield N-(5'-phosphoribosyl)-anthranilate (PRA). The chain is Anthranilate phosphoribosyltransferase from Thermobifida fusca (strain YX).